The chain runs to 311 residues: Putative S-adenosyl-L-methionine-dependent methyltransferase MMAR_0358 (311 aa).

Residues D132 and 161–162 each bind S-adenosyl-L-methionine; that span reads DL.

The protein belongs to the UPF0677 family.

In terms of biological role, exhibits S-adenosyl-L-methionine-dependent methyltransferase activity. The sequence is that of Putative S-adenosyl-L-methionine-dependent methyltransferase MMAR_0358 from Mycobacterium marinum (strain ATCC BAA-535 / M).